Here is a 133-residue protein sequence, read N- to C-terminus: Large ribosomal subunit protein bL20 (133 aa).

This sequence belongs to the bacterial ribosomal protein bL20 family.

Binds directly to 23S ribosomal RNA and is necessary for the in vitro assembly process of the 50S ribosomal subunit. It is not involved in the protein synthesizing functions of that subunit. This Chelativorans sp. (strain BNC1) protein is Large ribosomal subunit protein bL20.